Consider the following 465-residue polypeptide: Iron-sulfur cluster assembly SufBD family protein SE_0610 (465 aa).

It belongs to the iron-sulfur cluster assembly SufBD family.

The chain is Iron-sulfur cluster assembly SufBD family protein SE_0610 from Staphylococcus epidermidis (strain ATCC 12228 / FDA PCI 1200).